The chain runs to 98 residues: Large ribosomal subunit protein uL23 (98 aa).

The protein belongs to the universal ribosomal protein uL23 family. Part of the 50S ribosomal subunit. Contacts protein L29, and trigger factor when it is bound to the ribosome.

One of the early assembly proteins it binds 23S rRNA. One of the proteins that surrounds the polypeptide exit tunnel on the outside of the ribosome. Forms the main docking site for trigger factor binding to the ribosome. The polypeptide is Large ribosomal subunit protein uL23 (Bordetella bronchiseptica (strain ATCC BAA-588 / NCTC 13252 / RB50) (Alcaligenes bronchisepticus)).